Consider the following 269-residue polypeptide: MALEKIIRESLTGFLQCHIAHADLSALDEVFCAYVTGVLEELGSQNSSEEDFEMESFVEMLEGYIPGFSEISSEKVYDMLFELSGRLSEARGTENVSPNPTVEVSFMTPASPSEKTATEPLEGAVAQDKDDPKTGVDLLLEIFPSCTITQAQTALSMAKGDLEDAVQIIVDGKVIADNHSGSKDMQGAPKIEDLKDFILQKYMLVDTEDDKKTYRPVAPKEAPKKMIRYIDNQVVSTKGERYKDIKKPESEEMKKTYINLKPARKYKFH.

The interval 110–130 (ASPSEKTATEPLEGAVAQDKD) is disordered. A CUE domain is found at 131 to 174 (DPKTGVDLLLEIFPSCTITQAQTALSMAKGDLEDAVQIIVDGKV).

This sequence belongs to the CUEDC2 family. Phosphorylated.

It is found in the cytoplasm. It localises to the nucleus. May play a role in targeting proteins for ubiquitination and subsequent proteasomal degradation. This is CUE domain-containing protein 2-B (cuedc2-b) from Xenopus laevis (African clawed frog).